We begin with the raw amino-acid sequence, 289 residues long: Shikimate dehydrogenase (NADP(+)) (289 aa).

Shikimate is bound by residues 20 to 22 and Ser67; that span reads SIS. Lys71 serves as the catalytic Proton acceptor. Asp83 serves as a coordination point for NADP(+). Positions 92 and 107 each coordinate shikimate. NADP(+) is bound by residues 132 to 136 and Val230; that span reads GGGGA. Residue Tyr232 participates in shikimate binding. Gly253 is a binding site for NADP(+).

Belongs to the shikimate dehydrogenase family. As to quaternary structure, homodimer.

The enzyme catalyses shikimate + NADP(+) = 3-dehydroshikimate + NADPH + H(+). It participates in metabolic intermediate biosynthesis; chorismate biosynthesis; chorismate from D-erythrose 4-phosphate and phosphoenolpyruvate: step 4/7. Functionally, involved in the biosynthesis of the chorismate, which leads to the biosynthesis of aromatic amino acids. Catalyzes the reversible NADPH linked reduction of 3-dehydroshikimate (DHSA) to yield shikimate (SA). The protein is Shikimate dehydrogenase (NADP(+)) of Streptococcus suis (strain 98HAH33).